The primary structure comprises 461 residues: Thyroid hormone receptor beta (461 aa).

The disordered stretch occupies residues 1 to 24 (MTPNSMTENGLPAWDKQKPRPDRG). The interval 1–106 (MTPNSMTENG…IPSYLDKDEL (106 aa)) is modulating. Positions 15-24 (DKQKPRPDRG) are enriched in basic and acidic residues. Residues Cys-107, Cys-110, Cys-124, Cys-127, Cys-145, Cys-151, Cys-161, and Cys-164 each coordinate Zn(2+). 2 NR C4-type zinc fingers span residues 107–127 (CVVC…CEGC) and 145–169 (CKYE…FKKC). Residues 107 to 181 (CVVCGDKATG…VGMATDLVLD (75 aa)) constitute a DNA-binding region (nuclear receptor). The region spanning 217–461 (EEWELIKTVT…PPLFLEVFED (245 aa)) is the NR LBD domain. An interaction with NR2F6 region spans residues 244-461 (KFLPEDIGQA…PPLFLEVFED (218 aa)). 3,3',5-triiodo-L-thyronine is bound by residues Arg-282, Asn-331, and His-435. L-thyroxine is bound by residues Arg-282, Asn-331, and His-435.

It belongs to the nuclear hormone receptor family. NR1 subfamily. In terms of assembly, binds DNA as a dimer; homodimer and heterodimer with RXRB. Interacts with the coactivators NCOA1/SRC1, NCOA2/GRIP1, NCOA7 and MED1/TRAP220 in a ligand-inducible manner. Interacts with the corepressor NCOR1 in absence of ligand. Interacts with C1D. Interacts with NR2F6; the interaction impairs the binding of the THRB homodimer and THRB:RXRB heterodimer to T3 response elements. Interacts with PRMT2 and THRSP. Interacts with TACC1; this interaction is decreased in the presence of thyroid hormone T3.

Its subcellular location is the nucleus. Functionally, nuclear hormone receptor that can act as a repressor or activator of transcription. High affinity receptor for thyroid hormones, including triiodothyronine and thyroxine. In Mus musculus (Mouse), this protein is Thyroid hormone receptor beta (Thrb).